The primary structure comprises 826 residues: Eukaryotic translation initiation factor 3 subunit C (826 aa).

Disordered stretches follow at residues 1-71 (MSRF…GKGA) and 205-227 (SGGD…PRAK). Residues 10–20 (DSDDSSSDEDL) are compositionally biased toward acidic residues. Residues 21 to 30 (YGSGSESGSD) show a composition bias toward low complexity. The segment covering 32-65 (SQDEQDGGDDNDDDMSDDSMFADDSDDDSDDDED) has biased composition (acidic residues). Over residues 218–227 (KEDKPKPRAK) the composition is skewed to basic and acidic residues. One can recognise a PCI domain in the interval 605 to 779 (FHTHINLELL…NSVVFTQAVQ (175 aa)).

It belongs to the eIF-3 subunit C family. Component of the eukaryotic translation initiation factor 3 (eIF-3) complex.

It localises to the cytoplasm. Component of the eukaryotic translation initiation factor 3 (eIF-3) complex, which is involved in protein synthesis of a specialized repertoire of mRNAs and, together with other initiation factors, stimulates binding of mRNA and methionyl-tRNAi to the 40S ribosome. The eIF-3 complex specifically targets and initiates translation of a subset of mRNAs involved in cell proliferation. In Yarrowia lipolytica (strain CLIB 122 / E 150) (Yeast), this protein is Eukaryotic translation initiation factor 3 subunit C.